The following is a 178-amino-acid chain: Inner membrane-spanning protein YciB (178 aa).

5 helical membrane-spanning segments follow: residues 12–32 (LFFA…VAIV), 50–70 (PMQW…LVLH), 74–94 (FIMW…LISD), 120–140 (LTFA…FVAF), and 145–165 (AVWV…FVLA).

Belongs to the YciB family.

It is found in the cell inner membrane. In terms of biological role, plays a role in cell envelope biogenesis, maintenance of cell envelope integrity and membrane homeostasis. This is Inner membrane-spanning protein YciB from Laribacter hongkongensis (strain HLHK9).